The primary structure comprises 124 residues: Putative iron-sulfur cluster insertion protein ErpA (124 aa).

3 residues coordinate iron-sulfur cluster: C49, C113, and C115.

The protein belongs to the HesB/IscA family. In terms of assembly, homodimer. Iron-sulfur cluster serves as cofactor.

Functionally, required for insertion of 4Fe-4S clusters. This Acidovorax sp. (strain JS42) protein is Putative iron-sulfur cluster insertion protein ErpA.